A 414-amino-acid chain; its full sequence is Esterase FrsA (414 aa).

Belongs to the FrsA family.

It carries out the reaction a carboxylic ester + H2O = an alcohol + a carboxylate + H(+). In terms of biological role, catalyzes the hydrolysis of esters. This Escherichia coli O45:K1 (strain S88 / ExPEC) protein is Esterase FrsA.